A 963-amino-acid chain; its full sequence is Reversion-inducing cysteine-rich protein with Kazal motifs (963 aa).

An N-terminal signal peptide occupies residues 1–28 (MAAAVAAWPWALFCLAAVPPLLSPGAAG). A Knot 1 repeat occupies 31-78 (CCYHAKDNLMCRDVCEQILSSKSDSRLKHLLQRAPEYCPESMGEVWGC). A 5 X Knot repeats region spans residues 31–332 (CCYHAKDNLM…NAVEVSMLTC (302 aa)). An N-linked (GlcNAc...) asparagine glycan is attached at N80. Knot repeat units follow at residues 98-135 (CCEL…LFSC) and 145-191 (CCSY…LIHC). N194 carries an N-linked (GlcNAc...) asparagine glycan. 2 Knot repeats span residues 210 to 257 (CCDR…LWQC) and 286 to 332 (CCSK…MLTC). Residues N291 and N346 are each glycosylated (N-linked (GlcNAc...) asparagine). Kazal-like domains are found at residues 621-667 (KFTG…SCIS), 692-746 (SFGK…PCQP), and 749-783 (KSVE…HCQA). 6 disulfides stabilise this stretch: C627–C652, C629–C648, C637–C665, C710–C729, C718–C744, and C755–C781. A lipid anchor (GPI-anchor amidated serine) is attached at S936. The propeptide occupies 937 to 963 (PSVKVGPVLHCLFISFSFTLLKLMDYI).

The protein belongs to the RECK family. In terms of assembly, interacts (via knot repeats) with WNT7A (via disordered linker region); the interaction is direct. Interacts (via knot repeats) with WNT7B (via disordered linker region); the interaction is direct. Interacts with ADGRA2; the interaction is direct. Post-translationally, localizes to the plasma membrane via its GPI-anchor. Released from the plasma membrane following cleavage of the GPI-anchor by GDPD5/GPE2.

The protein localises to the cell membrane. Functionally, functions together with ADGRA2 to enable brain endothelial cells to selectively respond to Wnt7 signals (WNT7A or WNT7B). Plays a key role in Wnt7-specific responses: required for central nervous system (CNS) angiogenesis and blood-brain barrier regulation. Acts as a Wnt7-specific coactivator of canonical Wnt signaling by decoding Wnt ligands: acts by interacting specifically with the disordered linker region of Wnt7, thereby conferring ligand selectivity for Wnt7. ADGRA2 is then required to deliver RECK-bound Wnt7 to frizzled by assembling a higher-order RECK-ADGRA2-Fzd-LRP5-LRP6 complex. Also acts as a serine protease inhibitor. The sequence is that of Reversion-inducing cysteine-rich protein with Kazal motifs from Gallus gallus (Chicken).